Reading from the N-terminus, the 352-residue chain is Holliday junction branch migration complex subunit RuvB (352 aa).

Residues 5–191 form a large ATPase domain (RuvB-L) region; the sequence is TDDFSEQRVI…FGIVARLEFY (187 aa). ATP is bound by residues Leu-30, Arg-31, Gly-72, Lys-75, Thr-76, Thr-77, 138–140, Arg-181, Tyr-191, and Arg-228; that span reads EDY. Residue Thr-76 participates in Mg(2+) binding. A small ATPAse domain (RuvB-S) region spans residues 192–262; sequence TPLELTRIVT…MADAALVMLD (71 aa). The segment at 265-352 is head domain (RuvB-H); it reads PVGFDVMDRK…GPNGELWGGQ (88 aa). 3 residues coordinate DNA: Arg-301, Arg-320, and Arg-325.

This sequence belongs to the RuvB family. Homohexamer. Forms an RuvA(8)-RuvB(12)-Holliday junction (HJ) complex. HJ DNA is sandwiched between 2 RuvA tetramers; dsDNA enters through RuvA and exits via RuvB. An RuvB hexamer assembles on each DNA strand where it exits the tetramer. Each RuvB hexamer is contacted by two RuvA subunits (via domain III) on 2 adjacent RuvB subunits; this complex drives branch migration. In the full resolvosome a probable DNA-RuvA(4)-RuvB(12)-RuvC(2) complex forms which resolves the HJ.

It localises to the cytoplasm. The enzyme catalyses ATP + H2O = ADP + phosphate + H(+). Its function is as follows. The RuvA-RuvB-RuvC complex processes Holliday junction (HJ) DNA during genetic recombination and DNA repair, while the RuvA-RuvB complex plays an important role in the rescue of blocked DNA replication forks via replication fork reversal (RFR). RuvA specifically binds to HJ cruciform DNA, conferring on it an open structure. The RuvB hexamer acts as an ATP-dependent pump, pulling dsDNA into and through the RuvAB complex. RuvB forms 2 homohexamers on either side of HJ DNA bound by 1 or 2 RuvA tetramers; 4 subunits per hexamer contact DNA at a time. Coordinated motions by a converter formed by DNA-disengaged RuvB subunits stimulates ATP hydrolysis and nucleotide exchange. Immobilization of the converter enables RuvB to convert the ATP-contained energy into a lever motion, pulling 2 nucleotides of DNA out of the RuvA tetramer per ATP hydrolyzed, thus driving DNA branch migration. The RuvB motors rotate together with the DNA substrate, which together with the progressing nucleotide cycle form the mechanistic basis for DNA recombination by continuous HJ branch migration. Branch migration allows RuvC to scan DNA until it finds its consensus sequence, where it cleaves and resolves cruciform DNA. The chain is Holliday junction branch migration complex subunit RuvB from Herminiimonas arsenicoxydans.